We begin with the raw amino-acid sequence, 120 residues long: MPDRSHLQSGKDAERQALEHLQHQGLRLLAQNWLCKRGELDLVMLDGDTVVFVEVRYRKNTQWGGALDSIDGRKRQKLIFAAQYFLQRESRWANSPCRFDVVAIDSHQDQLNWLQNAFDS.

This sequence belongs to the UPF0102 family.

The sequence is that of UPF0102 protein Pfl01_4685 from Pseudomonas fluorescens (strain Pf0-1).